The primary structure comprises 133 residues: Small ribosomal subunit protein uS8 (133 aa).

It belongs to the universal ribosomal protein uS8 family. Part of the 30S ribosomal subunit. Contacts proteins S5 and S12.

Functionally, one of the primary rRNA binding proteins, it binds directly to 16S rRNA central domain where it helps coordinate assembly of the platform of the 30S subunit. This Chlamydia caviae (strain ATCC VR-813 / DSM 19441 / 03DC25 / GPIC) (Chlamydophila caviae) protein is Small ribosomal subunit protein uS8.